A 107-amino-acid chain; its full sequence is MSTPHADAQLNAADDLGIDSSAASAYDTPLGITNPPIDELLSRASSKYALVIYAAKRARQINDYYNQLGDGILEYVGPLVEPGLQEKPLSIALREIHGDLLEHTEGE.

This sequence belongs to the RNA polymerase subunit omega family. The RNAP catalytic core consists of 2 alpha, 1 beta, 1 beta' and 1 omega subunit. When a sigma factor is associated with the core the holoenzyme is formed, which can initiate transcription.

It carries out the reaction RNA(n) + a ribonucleoside 5'-triphosphate = RNA(n+1) + diphosphate. In terms of biological role, promotes RNA polymerase assembly. Latches the N- and C-terminal regions of the beta' subunit thereby facilitating its interaction with the beta and alpha subunits. The sequence is that of DNA-directed RNA polymerase subunit omega from Mycolicibacterium smegmatis (strain ATCC 700084 / mc(2)155) (Mycobacterium smegmatis).